Reading from the N-terminus, the 466-residue chain is Small RNA degrading nuclease 2 (466 aa).

Residues 142–298 (MIAIDCEMVL…HDAEAAMKLV (157 aa)) form the Exonuclease domain. The interval 426 to 466 (EENNASSKKRKRENHSKGTRDRRRCKPLSRRKQRSNVKRRR) is disordered. A compositionally biased stretch (basic residues) spans 445–466 (RDRRRCKPLSRRKQRSNVKRRR).

This sequence belongs to the REXO1/REXO3 family.

Its subcellular location is the nucleus. Functionally, 3'-5' exonuclease degrading single-stranded small RNAs. The chain is Small RNA degrading nuclease 2 (SDN2) from Arabidopsis thaliana (Mouse-ear cress).